We begin with the raw amino-acid sequence, 1579 residues long: tRNA (guanosine(18)-2'-O)-methyltransferase TARBP1 (1579 aa).

Met-1 carries the post-translational modification N-acetylmethionine. Val-1501, Gly-1524, Ile-1544, Gln-1546, and Leu-1553 together coordinate S-adenosyl-L-homocysteine.

This sequence belongs to the class IV-like SAM-binding methyltransferase superfamily. RNA methyltransferase TrmH family. In terms of assembly, monomer and homodimer.

It catalyses the reaction guanosine(18) in tRNA + S-adenosyl-L-methionine = 2'-O-methylguanosine(18) in tRNA + S-adenosyl-L-homocysteine + H(+). In terms of biological role, S-adenosyl-L-methionine-dependent 2'-O-ribose methyltransferase that catalyzes the formation of 2'-O-methylguanosine at position 18 (Gm18) in a subset of tRNA. Selectively mediates Gm18 methylation of tRNAGln-TTG/CTG and tRNASer-TGA/GCT. Gm18 modification can enhance the stability of modified tRNAs. This Mus musculus (Mouse) protein is tRNA (guanosine(18)-2'-O)-methyltransferase TARBP1.